The following is a 372-amino-acid chain: MLSVWNLPVEQQPQQQQQQQQNIINSSNNINSINSALDNILNTTSKGIQLPRFNLLNTSSSGFLTNSNDTLFLENNNNNNNNINQQLNKSVLNSSNKQLDIIKTINEISNEHKSFQPFEITPIKPQSTSTNTYNTEFGVINQNTFVLDSNKIEELRVDTSVLDPLLSLPYNIINNTTNNNNNNNNNNNNNNNNNNSNNNNSNNNNINNNNNKSNTPMKKESTIRNSNSTFEKFESPTLSTTFGLNKEELNTFTTTDMNNYVKQANMVKELSQVEKKELKRQKRLIKNRESAHLSRQRKRERLTDLEHRVEELSSNSIDINKTLSSLENENLILKAEVGQLFEVINDSPVLSALFYKIASLSQQPQKDTIGAY.

Disordered stretches follow at residues 1–20 and 176–234; these read MLSV…QQQQ and TTNN…EKFE. Low complexity-rich tracts occupy residues 11 to 20 and 176 to 215; these read QQPQQQQQQQ and TTNN…KSNT. Over residues 223–234 the composition is skewed to polar residues; it reads IRNSNSTFEKFE. In terms of domain architecture, bZIP spans 277–340; sequence ELKRQKRLIK…LILKAEVGQL (64 aa). Residues 279-301 form a basic motif region; it reads KRQKRLIKNRESAHLSRQRKRER. A leucine-zipper region spans residues 305 to 340; the sequence is LEHRVEELSSNSIDINKTLSSLENENLILKAEVGQL.

This sequence belongs to the bZIP family.

The protein resides in the nucleus. Its function is as follows. Probable transcriptional regulator. This chain is Probable basic-leucine zipper transcription factor G (bzpG), found in Dictyostelium discoideum (Social amoeba).